The sequence spans 150 residues: Large ribosomal subunit protein bL9 (150 aa).

Belongs to the bacterial ribosomal protein bL9 family.

Its function is as follows. Binds to the 23S rRNA. The protein is Large ribosomal subunit protein bL9 of Wigglesworthia glossinidia brevipalpis.